Consider the following 438-residue polypeptide: Actin-like protein 7A (438 aa).

The segment at 36–56 (ASLKDGPAKRAVWVRRDHSEP) is required for interaction with TES.

It belongs to the actin family. Interacts (via N-terminus) with TES (via LIM domain 2). Heterodimer with TES; the heterodimer interacts with ENAH to form a heterotrimer. Interacts with ACTL9. Interacts with CYLC1; the interaction may be relevant for proper acrosome attachment to the nuclear envelope.

It is found in the cytoplasm. The protein resides in the cytoskeleton. It localises to the golgi apparatus. Its subcellular location is the nucleus. Its function is as follows. Essential for normal spermatogenesis and male fertility. Required for normal sperm head morphology, acroplaxome formation, acrosome attachment, and acrosome granule stability. May anchor and stabilize acrosomal adherence to the acroplaxome at least in part by facilitating the presence of F-actin in the subacrosomal space. May play an important role in formation and fusion of Golgi-derived vesicles during acrosome biogenesis. In Bos taurus (Bovine), this protein is Actin-like protein 7A (ACTL7A).